Reading from the N-terminus, the 189-residue chain is MINRIKISQVIVAEGRDDTTNLKRYFDVETYETRWSAINDQDIERIQRLHELHGVIVFTDPDFNDERIRRMIITVIPTVQHVFLKRDEAVPKSKTKGRSLGIEHASYEDLKTALAQVTEQFKNENEFDISRSDLIRLGFLAGADSRKRREYLGEQLRIGYSNGKQLLKRLELFGVTLAEVKEAMTKYSI.

The Toprim domain occupies 8-91; sequence SQVIVAEGRD…VFLKRDEAVP (84 aa). Residues Glu14, Asp60, and Asp62 each contribute to the Mg(2+) site.

This sequence belongs to the ribonuclease M5 family. Mg(2+) serves as cofactor.

The protein localises to the cytoplasm. The catalysed reaction is Endonucleolytic cleavage of RNA, removing 21 and 42 nucleotides, respectively, from the 5'- and 3'-termini of a 5S-rRNA precursor.. Functionally, required for correct processing of both the 5' and 3' ends of 5S rRNA precursor. Cleaves both sides of a double-stranded region yielding mature 5S rRNA in one step. This is Ribonuclease M5 2 from Ligilactobacillus salivarius (strain UCC118) (Lactobacillus salivarius).